A 320-amino-acid chain; its full sequence is Aspartate carbamoyltransferase catalytic subunit (320 aa).

Carbamoyl phosphate contacts are provided by Arg-57 and Thr-58. Position 85 (Lys-85) interacts with L-aspartate. Carbamoyl phosphate contacts are provided by Arg-107, His-141, and Gln-144. Positions 174 and 228 each coordinate L-aspartate. Residues Gly-269 and Pro-270 each coordinate carbamoyl phosphate.

The protein belongs to the aspartate/ornithine carbamoyltransferase superfamily. ATCase family. As to quaternary structure, heterododecamer (2C3:3R2) of six catalytic PyrB chains organized as two trimers (C3), and six regulatory PyrI chains organized as three dimers (R2).

It catalyses the reaction carbamoyl phosphate + L-aspartate = N-carbamoyl-L-aspartate + phosphate + H(+). It participates in pyrimidine metabolism; UMP biosynthesis via de novo pathway; (S)-dihydroorotate from bicarbonate: step 2/3. In terms of biological role, catalyzes the condensation of carbamoyl phosphate and aspartate to form carbamoyl aspartate and inorganic phosphate, the committed step in the de novo pyrimidine nucleotide biosynthesis pathway. The polypeptide is Aspartate carbamoyltransferase catalytic subunit (Mycobacterium marinum (strain ATCC BAA-535 / M)).